A 254-amino-acid polypeptide reads, in one-letter code: Large ribosomal subunit protein uL2 (254 aa).

The protein belongs to the universal ribosomal protein uL2 family. In terms of assembly, component of the large ribosomal subunit. Mature ribosomes consist of a small (40S) and a large (60S) subunit. The 40S subunit contains about 32 different proteins and 1 molecule of RNA (18S). The 60S subunit contains 45 different proteins and 3 molecules of RNA (25S, 5.8S and 5S).

Its subcellular location is the cytoplasm. Its function is as follows. Component of the ribosome, a large ribonucleoprotein complex responsible for the synthesis of proteins in the cell. The small ribosomal subunit (SSU) binds messenger RNAs (mRNAs) and translates the encoded message by selecting cognate aminoacyl-transfer RNA (tRNA) molecules. The large subunit (LSU) contains the ribosomal catalytic site termed the peptidyl transferase center (PTC), which catalyzes the formation of peptide bonds, thereby polymerizing the amino acids delivered by tRNAs into a polypeptide chain. The nascent polypeptides leave the ribosome through a tunnel in the LSU and interact with protein factors that function in enzymatic processing, targeting, and the membrane insertion of nascent chains at the exit of the ribosomal tunnel. This Candida albicans (strain SC5314 / ATCC MYA-2876) (Yeast) protein is Large ribosomal subunit protein uL2.